Here is a 92-residue protein sequence, read N- to C-terminus: Small nuclear ribonucleoprotein E (92 aa).

The Sm domain occupies 18–92 (INLIFRYLQN…NITLLQSVSN (75 aa)).

Belongs to the snRNP Sm proteins family. In terms of assembly, core component of the spliceosomal U1, U2, U4 and U5 small nuclear ribonucleoproteins (snRNPs), the building blocks of the spliceosome. Most spliceosomal snRNPs contain a common set of Sm proteins, SNRPB, SNRPD1, SNRPD2, SNRPD3, SNRPE, SNRPF and SNRPG that assemble in a heptameric protein ring on the Sm site of the small nuclear RNA to form the core snRNP. Component of the U1 snRNP. The U1 snRNP is composed of the U1 snRNA and the 7 core Sm proteins SNRPB, SNRPD1, SNRPD2, SNRPD3, SNRPE, SNRPF and SNRPG, and at least three U1 snRNP-specific proteins SNRNP70/U1-70K, SNRPA/U1-A and SNRPC/U1-C. Component of the U4/U6-U5 tri-snRNP complex composed of the U4, U6 and U5 snRNAs and at least PRPF3, PRPF4, PRPF6, PRPF8, PRPF31, SNRNP200, TXNL4A, SNRNP40, SNRPB, SNRPD1, SNRPD2, SNRPD3, SNRPE, SNRPF, SNRPG, DDX23, CD2BP2, PPIH, SNU13, EFTUD2, SART1 and USP39, plus LSM2, LSM3, LSM4, LSM5, LSM6, LSM7 and LSM8. Component of the U7 snRNP complex, or U7 Sm protein core complex, that is composed of the U7 snRNA and at least LSM10, LSM11, SNRPB, SNRPD3, SNRPE, SNRPF and SNRPG; the complex does not contain SNRPD1 and SNRPD2. Component of the minor spliceosome, which splices U12-type introns. Part of the SMN-Sm complex that contains SMN1, GEMIN2/SIP1, DDX20/GEMIN3, GEMIN4, GEMIN5, GEMIN6, GEMIN7, GEMIN8, STRAP/UNRIP and the Sm proteins SNRPB, SNRPD1, SNRPD2, SNRPD3, SNRPE, SNRPF and SNRPG; catalyzes core snRNPs assembly. Forms a 6S pICln-Sm complex composed of CLNS1A/pICln, SNRPD1, SNRPD2, SNRPE, SNRPF and SNRPG; ring-like structure where CLNS1A/pICln mimics additional Sm proteins and which is unable to assemble into the core snRNP. Interacts with SMN1; the interaction is direct. Interacts with GEMIN2 (via N-terminus); the interaction is direct. Interacts with SNRPF; the interaction is direct. Interacts with SNRPG; the interaction is direct.

It localises to the cytoplasm. Its subcellular location is the cytosol. The protein localises to the nucleus. Its function is as follows. Plays a role in pre-mRNA splicing as a core component of the spliceosomal U1, U2, U4 and U5 small nuclear ribonucleoproteins (snRNPs), the building blocks of the spliceosome. Component of both the pre-catalytic spliceosome B complex and activated spliceosome C complexes. As a component of the minor spliceosome, involved in the splicing of U12-type introns in pre-mRNAs. As part of the U7 snRNP it is involved in histone 3'-end processing. The sequence is that of Small nuclear ribonucleoprotein E (SNRPE) from Bos taurus (Bovine).